Here is a 535-residue protein sequence, read N- to C-terminus: Cytochrome c oxidase subunit 1 (535 aa).

The chain crosses the membrane as a helical span at residues 15-37; sequence IAILYFIFSTFCGLAGTAMSFII. Ca(2+) contacts are provided by glutamate 40, alanine 43, and glycine 45. Helical transmembrane passes span 58 to 80, 147 to 169, 190 to 212, 238 to 260, and 267 to 289; these read VLVT…IGGF, LAIF…FIVT, ILIT…TMLL, WFFG…SHIV, and PVFG…FLVW. A Fe(II)-heme a-binding site is contributed by histidine 63. Position 242 (histidine 242) interacts with Cu cation. Residues 242–246 constitute a cross-link (1'-histidyl-3'-tyrosine (His-Tyr)); it reads HPEVY. Tyrosine 246 is a binding site for O2. Cu cation contacts are provided by histidine 291 and histidine 292. Helical transmembrane passes span 304-326 and 339-361; these read AYFT…SWLT and MLYT…VLAN. Mg(2+) contacts are provided by histidine 369 and aspartate 370. 2 consecutive transmembrane segments (helical) span residues 376 to 398 and 415 to 437; these read THFH…YYWS and FWLI…INGM. Heme a3 is bound at residue histidine 377. Histidine 379 provides a ligand contact to Fe(II)-heme a. Position 442 (proline 442) interacts with Ca(2+). A helical membrane pass occupies residues 452 to 474; sequence NLVSSFGSMMTIMSLMLFTYIIY.

It belongs to the heme-copper respiratory oxidase family. Component of the cytochrome c oxidase (complex IV, CIV), a multisubunit enzyme composed of a catalytic core of 3 subunits and several supernumerary subunits. The complex exists as a monomer or a dimer and forms supercomplexes (SCs) in the inner mitochondrial membrane with ubiquinol-cytochrome c oxidoreductase (cytochrome b-c1 complex, complex III, CIII). It depends on heme as a cofactor. Cu cation is required as a cofactor.

Its subcellular location is the mitochondrion inner membrane. The enzyme catalyses 4 Fe(II)-[cytochrome c] + O2 + 8 H(+)(in) = 4 Fe(III)-[cytochrome c] + 2 H2O + 4 H(+)(out). The protein operates within energy metabolism; oxidative phosphorylation. Functionally, component of the cytochrome c oxidase, the last enzyme in the mitochondrial electron transport chain which drives oxidative phosphorylation. The respiratory chain contains 3 multisubunit complexes succinate dehydrogenase (complex II, CII), ubiquinol-cytochrome c oxidoreductase (cytochrome b-c1 complex, complex III, CIII) and cytochrome c oxidase (complex IV, CIV), that cooperate to transfer electrons derived from NADH and succinate to molecular oxygen, creating an electrochemical gradient over the inner membrane that drives transmembrane transport and the ATP synthase. Cytochrome c oxidase is the component of the respiratory chain that catalyzes the reduction of oxygen to water. Electrons originating from reduced cytochrome c in the intermembrane space (IMS) are transferred via the dinuclear copper A center (CU(A)) of subunit 2 and heme A of subunit 1 to the active site in subunit 1, a binuclear center (BNC) formed by heme A3 and copper B (CU(B)). The BNC reduces molecular oxygen to 2 water molecules using 4 electrons from cytochrome c in the IMS and 4 protons from the mitochondrial matrix. The protein is Cytochrome c oxidase subunit 1 (COX1) of Eremothecium gossypii (strain ATCC 10895 / CBS 109.51 / FGSC 9923 / NRRL Y-1056) (Yeast).